The chain runs to 224 residues: UPF0111 protein CPn_0681/CP_0066/CPj0681/CpB0708 (224 aa).

This sequence belongs to the UPF0111 family.

This Chlamydia pneumoniae (Chlamydophila pneumoniae) protein is UPF0111 protein CPn_0681/CP_0066/CPj0681/CpB0708.